The chain runs to 168 residues: MVIELAELKNFAKIFLTGIYENLERIIFGSGRYTSLEMRNAILTGTVKIPKTVIEELCIGCEGCANVCPTKAIEMIPIEPVKITDNYVKDKIPKINPEKCVYCLYCHDFCPVFSVFNEISPIHPRDVGEEYIEIDISKLLQKKIEISEEQINKISSLLSINLRRIIKD.

4Fe-4S ferredoxin-type domains lie at 48–78 and 91–122; these read KIPK…MIPI and KIPK…ISPI. The [4Fe-4S] cluster site is built by C58, C61, C64, C68, C100, C103, C106, and C110.

This is an uncharacterized protein from Methanocaldococcus jannaschii (strain ATCC 43067 / DSM 2661 / JAL-1 / JCM 10045 / NBRC 100440) (Methanococcus jannaschii).